A 164-amino-acid polypeptide reads, in one-letter code: UPF0114 protein YqhA (164 aa).

Helical transmembrane passes span 15 to 35 (LLAP…LKFF), 53 to 73 (LILV…LVMV), and 136 to 156 (LMWY…MGYL).

This sequence belongs to the UPF0114 family.

It is found in the cell membrane. In Shigella dysenteriae serotype 1 (strain Sd197), this protein is UPF0114 protein YqhA.